Consider the following 326-residue polypeptide: MMTPMWISLFKVLLLLFAFFATYEAKEYERIIKELFTITNDEGVVLFNTSADSAPFMPIPTQHDDPTQKQKQNQNQSPIPETNRHYHQYHSLIQPDQYFKVQRSPNGKLNLVFNDTFVSLQRTDTEVQSEQPIPPRHPSDTFVFPDSPIAKYRPPQSPARPLRNDTKEHNPCAKDESQHLRNFCTNVDDYPDLSGLTHKLKNNFAKFFSNDLQPTDVSSRVGGSDERFLCRSIRKLVYPKKGLRADDTWQLIVNNDEYKQAIQIEECEGADQPCDFAANFPQSYNPICKQHYTQQTLASIKSDGELDVVQNSFKIPSCCKCALKTG.

The signal sequence occupies residues 1 to 25; sequence MMTPMWISLFKVLLLLFAFFATYEA. The N-linked (GlcNAc...) asparagine glycan is linked to Asn-48. Residues 56–82 are disordered; that stretch reads FMPIPTQHDDPTQKQKQNQNQSPIPET. A compositionally biased stretch (polar residues) spans 69–80; the sequence is KQKQNQNQSPIP. 2 N-linked (GlcNAc...) asparagine glycosylation sites follow: Asn-114 and Asn-164. The disordered stretch occupies residues 152-174; sequence YRPPQSPARPLRNDTKEHNPCAK. The segment covering 162 to 174 has biased composition (basic and acidic residues); that stretch reads LRNDTKEHNPCAK. Residues 228–322 enclose the Spaetzle domain; that stretch reads FLCRSIRKLV…FKIPSCCKCA (95 aa). Intrachain disulfides connect Cys-230–Cys-288, Cys-267–Cys-319, and Cys-274–Cys-321.

In terms of assembly, homodimer; disulfide-linked. In the presence of Tl, crystal structures show one Tl molecule bound to a spaetzle C-106 homodimer. However, the active complex probably consists of two Tl molecules bound to a spaetzle C-106 homodimer. This is supported by in vitro experiments which also show binding of the spaetzle C-106 dimer to 2 Tl receptors. Ligand binding induces conformational changes in the extracellular domain of Tl. This may enable a secondary homodimerization interface at the C-terminus of the Tl extracellular domain. Post-translationally, during embryonic development proteolytically processed by activated ea/easter; ea cleaves the signal peptide and also generates the C-terminal 12 kDa active ligand for the Toll receptor, C-106 (except for isoform 8.24 and isoform 11.27 as they do not contain the cleavage site). During the immune response, cleaved in the same manner by SPE. In terms of processing, extracellular forms of isoform 8.19 and isoform 11.7 are glycosylated.

It is found in the secreted. Functionally, the activated form, spaetzle C-106, acts as a ligand for the Toll receptor. Binding to Toll activates the Toll signaling pathway and induces expression of the antifungal peptide drosomycin. Component of the extracellular signaling pathway that establishes dorsal-ventral polarity in the embryo. This Drosophila melanogaster (Fruit fly) protein is Protein spaetzle.